The chain runs to 340 residues: Uroporphyrinogen decarboxylase (340 aa).

Substrate-binding positions include 23–27 (RQAGR), Asp72, Tyr147, Thr202, and His316.

This sequence belongs to the uroporphyrinogen decarboxylase family. In terms of assembly, homodimer.

The protein localises to the cytoplasm. It carries out the reaction uroporphyrinogen III + 4 H(+) = coproporphyrinogen III + 4 CO2. It functions in the pathway porphyrin-containing compound metabolism; protoporphyrin-IX biosynthesis; coproporphyrinogen-III from 5-aminolevulinate: step 4/4. Its function is as follows. Catalyzes the decarboxylation of four acetate groups of uroporphyrinogen-III to yield coproporphyrinogen-III. The sequence is that of Uroporphyrinogen decarboxylase from Geobacter metallireducens (strain ATCC 53774 / DSM 7210 / GS-15).